The chain runs to 112 residues: uncharacterized protein (112 aa).

The N-terminal stretch at 1–25 is a signal peptide; that stretch reads MKGTKLAVVVGMTVAAVSLAAPAQA.

This is an uncharacterized protein from Mycobacterium tuberculosis (strain CDC 1551 / Oshkosh).